Reading from the N-terminus, the 406-residue chain is Cysteine desulfurase (406 aa).

The residue at position 226 (lysine 226) is an N6-(pyridoxal phosphate)lysine. Residue cysteine 364 is the Cysteine persulfide intermediate of the active site.

It belongs to the class-V pyridoxal-phosphate-dependent aminotransferase family. Csd subfamily. Homodimer. Interacts with SufE and the SufBCD complex composed of SufB, SufC and SufD. The interaction with SufE is required to mediate the direct transfer of the sulfur atom from the S-sulfanylcysteine. Requires pyridoxal 5'-phosphate as cofactor.

The protein resides in the cytoplasm. The catalysed reaction is (sulfur carrier)-H + L-cysteine = (sulfur carrier)-SH + L-alanine. The enzyme catalyses L-selenocysteine + AH2 = hydrogenselenide + L-alanine + A + H(+). Its pathway is cofactor biosynthesis; iron-sulfur cluster biosynthesis. In terms of biological role, cysteine desulfurases mobilize the sulfur from L-cysteine to yield L-alanine, an essential step in sulfur metabolism for biosynthesis of a variety of sulfur-containing biomolecules. Component of the suf operon, which is activated and required under specific conditions such as oxidative stress and iron limitation. Acts as a potent selenocysteine lyase in vitro, that mobilizes selenium from L-selenocysteine. Selenocysteine lyase activity is however unsure in vivo. In Shigella sonnei (strain Ss046), this protein is Cysteine desulfurase.